The chain runs to 940 residues: Insulin receptor substrate 1 (940 aa).

In terms of domain architecture, PH spans G8 to R109. In terms of domain architecture, IRS-type PTB spans Y122–N236. 3 positions are modified to phosphoserine: S284, S285, and S340. A Phosphotyrosine; by INSR modification is found at Y407. Residues Y407–M410 carry the YXXM motif 1 motif. A compositionally biased stretch (polar residues) spans N523–T540. Residues N523–A549 form a disordered region. A Phosphoserine modification is found at S548. The YXXM motif 2 signature appears at Y639–M642. Y883 carries the phosphotyrosine; by INSR modification. The tract at residues N895–E915 is disordered. A phosphoserine mark is found at S904 and S907. Y920 is subject to Phosphotyrosine; by INSR.

In terms of assembly, bindings to phosphatidylinositol 3-kinase and SHP2.

Activates phosphatidylinositol 3-kinase when bound to the regulatory p85 subunit. May mediate the control of various cellular processes by insulin-like peptides. When phosphorylated by the insulin receptor binds specifically to various cellular proteins containing SH2 domains. Involved in control of cell proliferation, cell size, and body and organ growth throughout development. Also has a role in a signaling pathway controlling the physiological response required to endure periods of low nutrient conditions. Insulin/insulin-like growth factor (IGF) signaling pathway has a role in regulating aging and is necessary in the ovary for vitellogenic maturation. This chain is Insulin receptor substrate 1, found in Drosophila ananassae (Fruit fly).